Consider the following 347-residue polypeptide: NADH-ubiquinone oxidoreductase chain 2 (347 aa).

9 consecutive transmembrane segments (helical) span residues 3-23 (PPIF…VLIS), 25-45 (HWLL…PILM), 59-79 (YFLT…INLL), 111-131 (FHFW…MILL), 149-169 (INPN…GWGG), 200-220 (LMHL…MLFM), 242-262 (LLIL…GFIP), 274-294 (NMII…YFYM), and 325-345 (LLPP…MMLI).

Belongs to the complex I subunit 2 family. As to quaternary structure, core subunit of respiratory chain NADH dehydrogenase (Complex I) which is composed of 45 different subunits. Interacts with TMEM242.

The protein localises to the mitochondrion inner membrane. It carries out the reaction a ubiquinone + NADH + 5 H(+)(in) = a ubiquinol + NAD(+) + 4 H(+)(out). In terms of biological role, core subunit of the mitochondrial membrane respiratory chain NADH dehydrogenase (Complex I) which catalyzes electron transfer from NADH through the respiratory chain, using ubiquinone as an electron acceptor. Essential for the catalytic activity and assembly of complex I. This chain is NADH-ubiquinone oxidoreductase chain 2, found in Ailurus fulgens (Himalayan red panda).